We begin with the raw amino-acid sequence, 290 residues long: MAALRALLPRVRAPLRPWLFCPVQRSFASSAAFEYIITAKKGRNSNVGLIQLNRPKALNALCNGLIVELNQALQAFEEDPAVGAIVLTGGEKVFAAGADIKEMQSLTFQNCYSGGFLSHWDQLTRVKKPVIAAVNGYALGGGCELAMMCDIIYAGEKAQFGQPEILIGTIPGAGGTQRLTRAVGKSLAMEMVLTGDRISAQDAKQAGLVSKIFPVETVVEEAIQCAEKIASNSKIVTAMAKESVNAAFEMTLAEGVKLEKKLFYSTFATEDRKEGMAAFVEKRKANFKDQ.

The N-terminal 27 residues, 1–27 (MAALRALLPRVRAPLRPWLFCPVQRSF), are a transit peptide targeting the mitochondrion. Residues 98–101 (ADIK) and G141 each bind substrate. N6-acetyllysine; alternate is present on K101. N6-succinyllysine; alternate is present on K101. At K204 the chain carries N6-succinyllysine. K211 is modified (N6-acetyllysine).

Belongs to the enoyl-CoA hydratase/isomerase family. Homohexamer; dimer of trimers.

It is found in the mitochondrion matrix. The enzyme catalyses a (3S)-3-hydroxyacyl-CoA = a (2E)-enoyl-CoA + H2O. The catalysed reaction is a (3E)-enoyl-CoA = a 4-saturated (2E)-enoyl-CoA. It catalyses the reaction (3E)-hexenoyl-CoA = (2E)-hexenoyl-CoA. It carries out the reaction (3S)-3-hydroxybutanoyl-CoA = (2E)-butenoyl-CoA + H2O. The enzyme catalyses 3-hydroxyisovaleryl-CoA = 3-methylbut-2-enoyl-CoA + H2O. The catalysed reaction is 3-hydroxypropanoyl-CoA = acryloyl-CoA + H2O. It catalyses the reaction 3-hydroxybutanoyl-CoA = (2E)-butenoyl-CoA + H2O. It carries out the reaction 2-methylpropenoyl-CoA + H2O = (S)-3-hydroxyisobutanoyl-CoA. The enzyme catalyses (3S)-hydroxyhexanoyl-CoA = (2E)-hexenoyl-CoA + H2O. The catalysed reaction is (3S)-hydroxydecanoyl-CoA = (2E)-decenoyl-CoA + H2O. Its pathway is lipid metabolism; fatty acid beta-oxidation. In terms of biological role, converts unsaturated trans-2-enoyl-CoA species ((2E)-enoyl-CoA) to the corresponding 3(S)-3-hydroxyacyl-CoA species through addition of a water molecule to the double bond. Catalyzes the hydration of medium- and short-chained fatty enoyl-CoA thioesters from 4 carbons long (C4) up to C16. Has high substrate specificity for crotonyl-CoA ((2E)-butenoyl-CoA) and moderate specificity for acryloyl-CoA, 3-methylcrotonyl-CoA (3-methyl-(2E)-butenoyl-CoA) and methacrylyl-CoA ((2E)-2-methylpropenoyl-CoA). Can bind tiglyl-CoA (2-methylcrotonoyl-CoA), but hydrates only a small amount of this substrate. Plays a key role in the beta-oxidation spiral of short- and medium-chain fatty acid oxidation. At a lower rate than the hydratase reaction, catalyzes the isomerase reaction of trans-3-enoyl-CoA species (such as (3E)-hexenoyl-CoA) to trans-2-enoyl-CoA species (such as (2E)-hexenoyl-CoA), which are subsequently hydrated to 3(S)-3-hydroxyacyl-CoA species (such as (3S)-hydroxyhexanoyl-CoA). In Bos taurus (Bovine), this protein is Enoyl-CoA hydratase, mitochondrial (ECHS1).